The chain runs to 497 residues: Glycerol kinase (497 aa).

Thr-13 contacts ADP. ATP contacts are provided by Thr-13, Thr-14, and Ser-15. Position 13 (Thr-13) interacts with sn-glycerol 3-phosphate. Residue Arg-17 coordinates ADP. Sn-glycerol 3-phosphate-binding residues include Arg-83, Glu-84, and Tyr-135. Glycerol is bound by residues Arg-83, Glu-84, and Tyr-135. His-231 carries the post-translational modification Phosphohistidine; by HPr. Asp-245 contacts sn-glycerol 3-phosphate. Positions 245 and 246 each coordinate glycerol. Residues Thr-267 and Gly-310 each contribute to the ADP site. Residues Thr-267, Gly-310, Gln-314, and Gly-411 each coordinate ATP. ADP is bound by residues Gly-411 and Asn-415.

This sequence belongs to the FGGY kinase family. Homotetramer and homodimer (in equilibrium). In terms of processing, the phosphoenolpyruvate-dependent sugar phosphotransferase system (PTS), including enzyme I, and histidine-containing protein (HPr) are required for the phosphorylation, which leads to the activation of the enzyme.

The enzyme catalyses glycerol + ATP = sn-glycerol 3-phosphate + ADP + H(+). It functions in the pathway polyol metabolism; glycerol degradation via glycerol kinase pathway; sn-glycerol 3-phosphate from glycerol: step 1/1. With respect to regulation, activated by phosphorylation and inhibited by fructose 1,6-bisphosphate (FBP). Functionally, key enzyme in the regulation of glycerol uptake and metabolism. Catalyzes the phosphorylation of glycerol to yield sn-glycerol 3-phosphate. In Listeria monocytogenes serotype 4b (strain F2365), this protein is Glycerol kinase.